We begin with the raw amino-acid sequence, 224 residues long: Protein FAM3D (224 aa).

An N-terminal signal peptide occupies residues Met1–Ser25. 2 cysteine pairs are disulfide-bonded: Cys55–Cys83 and Cys61–Cys218. The 159-residue stretch at Asn64 to Lys222 folds into the GG-type lectin domain. N-linked (GlcNAc...) asparagine glycosylation occurs at Asn107.

Belongs to the FAM3 family. In terms of tissue distribution, abundantly expressed in placenta and weakly expressed in small intestine.

The protein resides in the secreted. In Homo sapiens (Human), this protein is Protein FAM3D (FAM3D).